The following is a 398-amino-acid chain: Arginine biosynthesis bifunctional protein ArgJ (398 aa).

Substrate is bound by residues T148, K174, T185, E271, N393, and T398. T185 serves as the catalytic Nucleophile.

This sequence belongs to the ArgJ family. In terms of assembly, heterotetramer of two alpha and two beta chains.

It is found in the cytoplasm. It catalyses the reaction N(2)-acetyl-L-ornithine + L-glutamate = N-acetyl-L-glutamate + L-ornithine. It carries out the reaction L-glutamate + acetyl-CoA = N-acetyl-L-glutamate + CoA + H(+). It functions in the pathway amino-acid biosynthesis; L-arginine biosynthesis; L-ornithine and N-acetyl-L-glutamate from L-glutamate and N(2)-acetyl-L-ornithine (cyclic): step 1/1. The protein operates within amino-acid biosynthesis; L-arginine biosynthesis; N(2)-acetyl-L-ornithine from L-glutamate: step 1/4. Catalyzes two activities which are involved in the cyclic version of arginine biosynthesis: the synthesis of N-acetylglutamate from glutamate and acetyl-CoA as the acetyl donor, and of ornithine by transacetylation between N(2)-acetylornithine and glutamate. The protein is Arginine biosynthesis bifunctional protein ArgJ of Listeria monocytogenes serovar 1/2a (strain ATCC BAA-679 / EGD-e).